A 271-amino-acid polypeptide reads, in one-letter code: Methyltransferase psoC (271 aa).

It belongs to the methyltransferase superfamily. LaeA methyltransferase family.

The protein operates within secondary metabolite biosynthesis. Its function is as follows. Methyltransferase; part of the gene cluster that mediates the biosynthesis of pseurotin A, a competitive inhibitor of chitin synthase and an inducer of nerve-cell proliferation. The PKS-NRPS hybrid synthetase psoA is responsible for the biosynthesis of azaspirene, one of the first intermediates having the 1-oxa-7-azaspiro[4,4]-non-2-ene-4,6-dione core of pseurotin, via condensation of one acetyl-CoA, 4 malonyl-CoA, and a L-phenylalanine molecule. The dual-functional monooxygenase/methyltransferase psoF seems to be involved in the addition of the C3 methyl group onto the pseurotin scaffold. Azaspirene is then converted to synerazol through 4 steps including oxidation of C17 by the cytochrome P450 monooxygenase psoD, O-methylation of the hydroxy group of C8 by the methyltransferase psoC, and the trans-to-cis isomerization of the C13 olefin by the glutathione S-transferase psoE. The fourth step of synerazol production is performed by the dual-functional monooxygenase/methyltransferase psoF which seems to catalyze the epoxidation of the intermediate deepoxy-synerazol. Synerazol can be attacked by a water molecule nonenzymatically at two different positions to yield two diol products, pseurotin A and pseurotin D. The sequence is that of Methyltransferase psoC from Aspergillus fumigatus (strain ATCC MYA-4609 / CBS 101355 / FGSC A1100 / Af293) (Neosartorya fumigata).